Here is a 1835-residue protein sequence, read N- to C-terminus: AT-rich interactive domain-containing protein 2 (1835 aa).

Ala2 is modified (N-acetylalanine). Position 4 is a phosphoserine (Ser4). Glycyl lysine isopeptide (Lys-Gly) (interchain with G-Cter in SUMO2) cross-links involve residues Lys7, Lys15, and Lys119. Positions 13–105 (RRKGLAFLDE…YLEKYEKVHH (93 aa)) constitute an ARID domain. The LXXLL signature appears at 313-317 (LRFLL). Positions 524–603 (ACQWLNAHFE…IHVVGVKRRA (80 aa)) form a DNA-binding region, RFX-type winged-helix. Residue Lys555 forms a Glycyl lysine isopeptide (Lys-Gly) (interchain with G-Cter in SUMO2) linkage. Ser631 and Ser635 each carry phosphoserine. The residue at position 653 (Thr653) is a Phosphothreonine. A Phosphoserine modification is found at Ser689. Thr692 is modified (phosphothreonine). 5 disordered regions span residues 819-844 (QQLI…QSQD), 962-1057 (LTGQ…SGES), 1266-1287 (MENP…KENE), 1295-1314 (NGRK…KIQS), and 1321-1341 (LISN…KQNS). Low complexity-rich tracts occupy residues 823–843 (TTSP…SQSQ), 985–996 (PTAMSSSSTPQS), and 1025–1044 (QVQV…QPQQ). Ser1300 carries the phosphoserine modification. A compositionally biased stretch (polar residues) spans 1301 to 1314 (DSSLPPSNSGKIQS). A phosphoserine mark is found at Ser1391 and Ser1496. Disordered regions lie at residues 1488-1522 (DSGS…AEDT) and 1572-1629 (SAVQ…RKPG). The span at 1491–1509 (SKVSHSPALSSDVRSTNGT) shows a compositional bias: polar residues. Positions 1513-1522 (KTVKRPAEDT) are enriched in basic and acidic residues. Polar residues predominate over residues 1573 to 1592 (AVQQKQQHPPTYVQNVVPQN). Residues 1602–1623 (QVQGQPNSSQPSPFSGSSQPGD) are compositionally biased toward low complexity. The C2H2-type zinc finger occupies 1632 to 1657 (FMCLWQSCKKWFQTPSQVFYHAATEH). Residues Lys1701, Lys1716, and Lys1731 each participate in a glycyl lysine isopeptide (Lys-Gly) (interchain with G-Cter in SUMO2) cross-link. A disordered region spans residues 1703–1728 (DEPGQAGSQKSSTKQPTVGGTSSTPR). The span at 1708 to 1728 (AGSQKSSTKQPTVGGTSSTPR) shows a compositional bias: polar residues.

Component of the SWI/SNF-B (PBAF) chromatin remodeling complex, at least composed of SMARCA4/BRG1, SMARCB1/BAF47/SNF5, ACTL6A/BAF53A or ACTL6B/BAF53B, SMARCE1/BAF57, SMARCD1/BAF60A, SMARCD2/BAF60B, perhaps SMARCD3/BAF60C, SMARCC1/BAF155, SMARCC2/BAF170, PBRM1/BAF180, ARID2/BAF200 and actin. Interacts with SRF. Forms complexes with SRF and SRF cofactors MYOCD, NKX2-5 and SRFBP1. As to expression, highly expressed in heart.

The protein resides in the nucleus. Involved in transcriptional activation and repression of select genes by chromatin remodeling (alteration of DNA-nucleosome topology). Required for the stability of the SWI/SNF chromatin remodeling complex SWI/SNF-B (PBAF). May be involved in targeting the complex to different genes. May be involved in regulating transcriptional activation of cardiac genes. This Homo sapiens (Human) protein is AT-rich interactive domain-containing protein 2.